The chain runs to 269 residues: Small ribosomal subunit protein uS3 (269 aa).

One can recognise a KH type-2 domain in the interval 38 to 106 (IREWLHKNLE…QIQLNILEVK (69 aa)). A disordered region spans residues 215–269 (AQKAARQAAQGGRGGRGGNRRGRGDRPDRRGGRRRAEAAKQSAETPAPQTENAGA). Over residues 236 to 252 (GRGDRPDRRGGRRRAEA) the composition is skewed to basic and acidic residues. Positions 256 to 269 (SAETPAPQTENAGA) are enriched in polar residues.

The protein belongs to the universal ribosomal protein uS3 family. Part of the 30S ribosomal subunit. Forms a tight complex with proteins S10 and S14.

Its function is as follows. Binds the lower part of the 30S subunit head. Binds mRNA in the 70S ribosome, positioning it for translation. This chain is Small ribosomal subunit protein uS3, found in Cutibacterium acnes (strain DSM 16379 / KPA171202) (Propionibacterium acnes).